The following is a 374-amino-acid chain: Tuliposide A-converting enzyme b3, amyloplastic (374 aa).

The transit peptide at 1–68 (MSAALFCGPP…TNSSLSPSPT (68 aa)) directs the protein to the amyloplast. The active-site Acyl-ester intermediate is the serine 226. Catalysis depends on charge relay system residues aspartate 316 and histidine 348.

The protein belongs to the AB hydrolase superfamily. In terms of assembly, homodimer. Highly expressed in pistil and bulb scales. Lower expression in stem, and barely detected in root, leaf, petal and stamen.

The protein resides in the plastid. Its subcellular location is the amyloplast. It catalyses the reaction 6-tuliposide A = tulipalin A + D-glucose. Lactone-forming carboxylesterases, specifically catalyzing intramolecular transesterification, but not hydrolysis. Involved in the biosynthesis of tulipalins, defensive chemicals that show antimicrobial activities against a broad range of strains of bacteria and fungi. Substrates are 6-tuliposide A &gt; 6-tuliposide B. The protein is Tuliposide A-converting enzyme b3, amyloplastic (TCEA-B3) of Tulipa gesneriana (Garden tulip).